Here is a 138-residue protein sequence, read N- to C-terminus: MLSPKKVKYRKKQRGRLSGEAQKGNKISFGEYGLVSLETNFITARQIEAARIAMTRKIKRGGRVWIRIFPDIPYTKKPAETRMGKGKGGVDHWNAPVKLGTVMFEMSGVVEELAQEAMSLASSKLPVKTMFVVRRDLR.

Positions 1–15 are enriched in basic residues; sequence MLSPKKVKYRKKQRG. A disordered region spans residues 1–21; that stretch reads MLSPKKVKYRKKQRGRLSGEA.

This sequence belongs to the universal ribosomal protein uL16 family. As to quaternary structure, part of the 50S ribosomal subunit.

In terms of biological role, binds 23S rRNA and is also seen to make contacts with the A and possibly P site tRNAs. The protein is Large ribosomal subunit protein uL16 of Borreliella burgdorferi (strain ATCC 35210 / DSM 4680 / CIP 102532 / B31) (Borrelia burgdorferi).